A 470-amino-acid polypeptide reads, in one-letter code: Glutamate--tRNA ligase 2 (470 aa).

A 'HIGH' region motif is present at residues 10 to 20 (PSPTGFLHIGS). The short motif at 239–243 (KLSKR) is the 'KMSKS' region element. ATP is bound at residue lysine 242.

It belongs to the class-I aminoacyl-tRNA synthetase family. Glutamate--tRNA ligase type 1 subfamily. As to quaternary structure, monomer.

The protein resides in the cytoplasm. The enzyme catalyses tRNA(Glu) + L-glutamate + ATP = L-glutamyl-tRNA(Glu) + AMP + diphosphate. Functionally, catalyzes the attachment of glutamate to tRNA(Glu) in a two-step reaction: glutamate is first activated by ATP to form Glu-AMP and then transferred to the acceptor end of tRNA(Glu). The protein is Glutamate--tRNA ligase 2 of Rickettsia prowazekii (strain Madrid E).